Consider the following 190-residue polypeptide: Xanthine phosphoribosyltransferase 1 (190 aa).

Positions 20 and 27 each coordinate xanthine. 128 to 132 (ANGEA) contributes to the 5-phospho-alpha-D-ribose 1-diphosphate binding site. Residue K156 participates in xanthine binding.

Belongs to the purine/pyrimidine phosphoribosyltransferase family. Xpt subfamily. Homodimer.

Its subcellular location is the cytoplasm. It carries out the reaction XMP + diphosphate = xanthine + 5-phospho-alpha-D-ribose 1-diphosphate. Its pathway is purine metabolism; XMP biosynthesis via salvage pathway; XMP from xanthine: step 1/1. In terms of biological role, converts the preformed base xanthine, a product of nucleic acid breakdown, to xanthosine 5'-monophosphate (XMP), so it can be reused for RNA or DNA synthesis. The protein is Xanthine phosphoribosyltransferase 1 of Clostridium botulinum (strain ATCC 19397 / Type A).